The primary structure comprises 122 residues: Small ribosomal subunit protein uS13 (122 aa).

The segment at 95 to 122 is disordered; it reads GLPVRGQRTHTNARTRKGPAKPIAGKKK.

This sequence belongs to the universal ribosomal protein uS13 family. Part of the 30S ribosomal subunit. Forms a loose heterodimer with protein S19. Forms two bridges to the 50S subunit in the 70S ribosome.

In terms of biological role, located at the top of the head of the 30S subunit, it contacts several helices of the 16S rRNA. In the 70S ribosome it contacts the 23S rRNA (bridge B1a) and protein L5 of the 50S subunit (bridge B1b), connecting the 2 subunits; these bridges are implicated in subunit movement. Contacts the tRNAs in the A and P-sites. The sequence is that of Small ribosomal subunit protein uS13 from Rhodospirillum rubrum (strain ATCC 11170 / ATH 1.1.1 / DSM 467 / LMG 4362 / NCIMB 8255 / S1).